We begin with the raw amino-acid sequence, 155 residues long: Secreted RxLR effector protein 38 (155 aa).

Residues M1 to A17 form the signal peptide. The RxLR-dEER motif lies at R49 to R64.

Belongs to the RxLR effector family.

Its subcellular location is the secreted. The protein localises to the host nucleus. The protein resides in the host cytoplasm. In terms of biological role, secreted effector that completely suppresses the host cell death induced by cell death-inducing proteins. The protein is Secreted RxLR effector protein 38 of Plasmopara viticola (Downy mildew of grapevine).